We begin with the raw amino-acid sequence, 230 residues long: Cytochrome c oxidase subunit 2 (230 aa).

At 1–14 the chain is on the mitochondrial intermembrane side; sequence MAHPSQLGFQDAAS. A helical membrane pass occupies residues 15–45; it reads PVMEELLHFHDHALMIVFLISTLVLYIIAAT. Residues 46 to 59 are Mitochondrial matrix-facing; the sequence is ASTKLTDKYILDSQ. A helical membrane pass occupies residues 60–87; sequence EIEVIWTIMPAVILILIALPSLRILYLM. The Mitochondrial intermembrane segment spans residues 88 to 230; it reads DEINDPHLTV…NWSSLMLEDA (143 aa). The Cu cation site is built by His-161, Cys-196, Glu-198, Cys-200, His-204, and Met-207. Position 198 (Glu-198) interacts with Mg(2+).

This sequence belongs to the cytochrome c oxidase subunit 2 family. In terms of assembly, component of the cytochrome c oxidase (complex IV, CIV), a multisubunit enzyme composed of 14 subunits. The complex is composed of a catalytic core of 3 subunits MT-CO1, MT-CO2 and MT-CO3, encoded in the mitochondrial DNA, and 11 supernumerary subunits COX4I, COX5A, COX5B, COX6A, COX6B, COX6C, COX7A, COX7B, COX7C, COX8 and NDUFA4, which are encoded in the nuclear genome. The complex exists as a monomer or a dimer and forms supercomplexes (SCs) in the inner mitochondrial membrane with NADH-ubiquinone oxidoreductase (complex I, CI) and ubiquinol-cytochrome c oxidoreductase (cytochrome b-c1 complex, complex III, CIII), resulting in different assemblies (supercomplex SCI(1)III(2)IV(1) and megacomplex MCI(2)III(2)IV(2)). Found in a complex with TMEM177, COA6, COX18, COX20, SCO1 and SCO2. Interacts with TMEM177 in a COX20-dependent manner. Interacts with COX20. Interacts with COX16. Cu cation is required as a cofactor.

It is found in the mitochondrion inner membrane. The enzyme catalyses 4 Fe(II)-[cytochrome c] + O2 + 8 H(+)(in) = 4 Fe(III)-[cytochrome c] + 2 H2O + 4 H(+)(out). In terms of biological role, component of the cytochrome c oxidase, the last enzyme in the mitochondrial electron transport chain which drives oxidative phosphorylation. The respiratory chain contains 3 multisubunit complexes succinate dehydrogenase (complex II, CII), ubiquinol-cytochrome c oxidoreductase (cytochrome b-c1 complex, complex III, CIII) and cytochrome c oxidase (complex IV, CIV), that cooperate to transfer electrons derived from NADH and succinate to molecular oxygen, creating an electrochemical gradient over the inner membrane that drives transmembrane transport and the ATP synthase. Cytochrome c oxidase is the component of the respiratory chain that catalyzes the reduction of oxygen to water. Electrons originating from reduced cytochrome c in the intermembrane space (IMS) are transferred via the dinuclear copper A center (CU(A)) of subunit 2 and heme A of subunit 1 to the active site in subunit 1, a binuclear center (BNC) formed by heme A3 and copper B (CU(B)). The BNC reduces molecular oxygen to 2 water molecules using 4 electrons from cytochrome c in the IMS and 4 protons from the mitochondrial matrix. The sequence is that of Cytochrome c oxidase subunit 2 (mt-co2) from Tetraodon nigroviridis (Spotted green pufferfish).